Reading from the N-terminus, the 557-residue chain is Dihydroxy-acid dehydratase (557 aa).

D78 provides a ligand contact to Mg(2+). C119 is a binding site for [2Fe-2S] cluster. Mg(2+)-binding residues include D120 and K121. K121 carries the N6-carboxylysine modification. [2Fe-2S] cluster is bound at residue C192. Residue E442 participates in Mg(2+) binding. S468 (proton acceptor) is an active-site residue.

It belongs to the IlvD/Edd family. Homodimer. The cofactor is [2Fe-2S] cluster. Mg(2+) serves as cofactor.

The enzyme catalyses (2R)-2,3-dihydroxy-3-methylbutanoate = 3-methyl-2-oxobutanoate + H2O. It carries out the reaction (2R,3R)-2,3-dihydroxy-3-methylpentanoate = (S)-3-methyl-2-oxopentanoate + H2O. It participates in amino-acid biosynthesis; L-isoleucine biosynthesis; L-isoleucine from 2-oxobutanoate: step 3/4. It functions in the pathway amino-acid biosynthesis; L-valine biosynthesis; L-valine from pyruvate: step 3/4. Functions in the biosynthesis of branched-chain amino acids. Catalyzes the dehydration of (2R,3R)-2,3-dihydroxy-3-methylpentanoate (2,3-dihydroxy-3-methylvalerate) into 2-oxo-3-methylpentanoate (2-oxo-3-methylvalerate) and of (2R)-2,3-dihydroxy-3-methylbutanoate (2,3-dihydroxyisovalerate) into 2-oxo-3-methylbutanoate (2-oxoisovalerate), the penultimate precursor to L-isoleucine and L-valine, respectively. The chain is Dihydroxy-acid dehydratase from Bacillus cereus (strain G9842).